The sequence spans 547 residues: Glucose-6-phosphate isomerase 2 (547 aa).

Glu351 functions as the Proton donor in the catalytic mechanism. Active-site residues include His382 and Lys508.

The protein belongs to the GPI family.

Its subcellular location is the cytoplasm. It catalyses the reaction alpha-D-glucose 6-phosphate = beta-D-fructose 6-phosphate. Its pathway is carbohydrate biosynthesis; gluconeogenesis. It participates in carbohydrate degradation; glycolysis; D-glyceraldehyde 3-phosphate and glycerone phosphate from D-glucose: step 2/4. Catalyzes the reversible isomerization of glucose-6-phosphate to fructose-6-phosphate. The protein is Glucose-6-phosphate isomerase 2 of Neisseria gonorrhoeae (strain ATCC 700825 / FA 1090).